The primary structure comprises 147 residues: Hemoglobin subunit gamma-1 (147 aa).

Gly2 bears the N-acetylglycine mark. The Globin domain maps to 3–147 (HFTEEDKATI…VASALSSRYH (145 aa)). Thr13 bears the Phosphothreonine mark. A phosphoserine mark is found at Ser45, Ser51, and Ser53. Lys60 bears the N6-acetyllysine mark. His64 lines the heme b pocket. The residue at position 83 (Lys83) is an N6-acetyllysine. His93 is a binding site for heme b. Cys94 is modified (S-nitrosocysteine). Ser140 bears the Phosphoserine mark.

It belongs to the globin family. Heterotetramer of two alpha chains and two gamma chains in fetal hemoglobin (Hb F). As to expression, red blood cells.

Functionally, gamma chains make up the fetal hemoglobin F, in combination with alpha chains. The protein is Hemoglobin subunit gamma-1 (HBG1) of Pongo pygmaeus (Bornean orangutan).